Reading from the N-terminus, the 142-residue chain is Hemoglobin subunit alpha (142 aa).

Positions 2–142 constitute a Globin domain; that stretch reads VLSSADKNNV…VSTVLTSKYR (141 aa). Residue serine 4 is modified to Phosphoserine. Lysine 8 and lysine 12 each carry N6-succinyllysine. Lysine 17 is subject to N6-acetyllysine; alternate. The residue at position 17 (lysine 17) is an N6-succinyllysine; alternate. Tyrosine 25 carries the phosphotyrosine modification. The residue at position 36 (serine 36) is a Phosphoserine. Lysine 41 bears the N6-succinyllysine mark. Position 50 is a phosphoserine (serine 50). An O2-binding site is contributed by histidine 59. Histidine 88 contributes to the heme b binding site. Serine 103 carries the phosphoserine modification. Threonine 109 is subject to Phosphothreonine. Residue serine 125 is modified to Phosphoserine. Phosphothreonine is present on residues threonine 135 and threonine 138. Position 139 is a phosphoserine (serine 139).

It belongs to the globin family. In terms of assembly, heterotetramer of two alpha chains and two beta chains. In terms of tissue distribution, red blood cells.

Functionally, involved in oxygen transport from the lung to the various peripheral tissues. Its function is as follows. Hemopressin acts as an antagonist peptide of the cannabinoid receptor CNR1. Hemopressin-binding efficiently blocks cannabinoid receptor CNR1 and subsequent signaling. The protein is Hemoglobin subunit alpha (HBA) of Panthera leo (Lion).